A 28-amino-acid polypeptide reads, in one-letter code: Dermaseptin-2 (28 aa).

Glutamine 28 carries the glutamine amide modification.

This sequence belongs to the frog skin active peptide (FSAP) family. Dermaseptin subfamily. Expressed by the skin glands.

The protein localises to the secreted. Its function is as follows. Antimicrobial peptide with activity against the Gram-positive bacterium S.aureus, and the Gram-negative bacteria E.coli and P.aeruginosa. Probably acts by disturbing membrane functions with its amphipathic structure. Has an activity of stimulation of insulin release, which may protect the species from being eaten by predators by causing fatal hypoglycemia. Has hemolytic activity (60% hemolysis at 128 ug/ml). This Phyllomedusa tarsius (Brownbelly leaf frog) protein is Dermaseptin-2.